The primary structure comprises 210 residues: Large ribosomal subunit protein uL4 (210 aa).

Polar residues predominate over residues K44 to R54. Residues K44 to G85 form a disordered region. Over residues G60–G71 the composition is skewed to basic residues.

The protein belongs to the universal ribosomal protein uL4 family. Part of the 50S ribosomal subunit.

Its function is as follows. One of the primary rRNA binding proteins, this protein initially binds near the 5'-end of the 23S rRNA. It is important during the early stages of 50S assembly. It makes multiple contacts with different domains of the 23S rRNA in the assembled 50S subunit and ribosome. Forms part of the polypeptide exit tunnel. In Prochlorococcus marinus (strain MIT 9301), this protein is Large ribosomal subunit protein uL4.